Consider the following 513-residue polypeptide: GMP synthase [glutamine-hydrolyzing] (513 aa).

Residues 9 to 198 (LILVLDFGSQ…VRRVCDCRGQ (190 aa)) enclose the Glutamine amidotransferase type-1 domain. Catalysis depends on Cys-86, which acts as the Nucleophile. Residues His-172 and Glu-174 contribute to the active site. The GMPS ATP-PPase domain occupies 199–388 (WTMENFIEIE…LGIPEHLVWR (190 aa)). Position 226-232 (226-232 (SGGVDSS)) interacts with ATP.

As to quaternary structure, homodimer.

The catalysed reaction is XMP + L-glutamine + ATP + H2O = GMP + L-glutamate + AMP + diphosphate + 2 H(+). Its pathway is purine metabolism; GMP biosynthesis; GMP from XMP (L-Gln route): step 1/1. Its function is as follows. Catalyzes the synthesis of GMP from XMP. This Staphylococcus aureus (strain USA300) protein is GMP synthase [glutamine-hydrolyzing].